We begin with the raw amino-acid sequence, 103 residues long: Large ribosomal subunit protein bL21 (103 aa).

The protein belongs to the bacterial ribosomal protein bL21 family. In terms of assembly, part of the 50S ribosomal subunit. Contacts protein L20.

In terms of biological role, this protein binds to 23S rRNA in the presence of protein L20. In Polynucleobacter asymbioticus (strain DSM 18221 / CIP 109841 / QLW-P1DMWA-1) (Polynucleobacter necessarius subsp. asymbioticus), this protein is Large ribosomal subunit protein bL21.